A 158-amino-acid polypeptide reads, in one-letter code: Sec-independent protein translocase protein TatB (158 aa).

The chain crosses the membrane as a helical span at residues 1 to 21; it reads MFDIGWSELLVIGVVALVVVG. The disordered stretch occupies residues 73 to 158; the sequence is RSMGLDAMKQ…PAPAEPKSNA (86 aa). Basic and acidic residues predominate over residues 83–92; sequence AADRFEKWDP. Composition is skewed to low complexity over residues 94–132 and 138–158; these read KPQQGAPKPAAPASSIPAAKAQQGAGAAAVTAPPASEPA and APAAAAPEAASPAPAEPKSNA.

The protein belongs to the TatB family. The Tat system comprises two distinct complexes: a TatABC complex, containing multiple copies of TatA, TatB and TatC subunits, and a separate TatA complex, containing only TatA subunits. Substrates initially bind to the TatABC complex, which probably triggers association of the separate TatA complex to form the active translocon.

It localises to the cell inner membrane. Its function is as follows. Part of the twin-arginine translocation (Tat) system that transports large folded proteins containing a characteristic twin-arginine motif in their signal peptide across membranes. Together with TatC, TatB is part of a receptor directly interacting with Tat signal peptides. TatB may form an oligomeric binding site that transiently accommodates folded Tat precursor proteins before their translocation. This is Sec-independent protein translocase protein TatB from Cereibacter sphaeroides (strain ATCC 17029 / ATH 2.4.9) (Rhodobacter sphaeroides).